A 434-amino-acid chain; its full sequence is Tryptophan dimethylallyltransferase nptA (434 aa).

Residues S91 to L92 and E100 contribute to the L-tryptophan site. Substrate-binding residues include R115, K202, and Y204. Y206 provides a ligand contact to L-tryptophan. Substrate-binding residues include R271, K273, Y275, Y358, Y423, and Y427.

Belongs to the tryptophan dimethylallyltransferase family. As to quaternary structure, homodimer.

It catalyses the reaction L-tryptophan + dimethylallyl diphosphate = 4-(3-methylbut-2-enyl)-L-tryptophan + diphosphate. It functions in the pathway secondary metabolite biosynthesis. Functionally, nonribosomal peptide synthase involved in the synthesis of nidulanin A and derived compounds. Nidulanin A is a tetracyclopeptide with the sequence L-Phe-L-Kyn-L-Val-D-Val and an isoprene unit N-linked to the amino group of L-kynurenine. The NRPS nlsA is responsible of the synthesis of the cyclopeptide and the prenyltransferase nptA adds the isoprene unit on the L-kynurenine residue of nidulanin A. Further modifications lead to additional oxygenated related compounds. The polypeptide is Tryptophan dimethylallyltransferase nptA (Emericella nidulans (strain FGSC A4 / ATCC 38163 / CBS 112.46 / NRRL 194 / M139) (Aspergillus nidulans)).